A 505-amino-acid polypeptide reads, in one-letter code: Surface lipoprotein assembly modifier 2 (505 aa).

An N-terminal signal peptide occupies residues 1–19; that stretch reads MLYFRYGFLVVWCAAGVSA. The N-terminal domain stretch occupies residues 23–188; it reads ADAPAILDDK…RFRKKTEGLT (166 aa). The interval 189-505 is C-terminal probable beta barrel; the sequence is GWRFSGGISP…EVFVSADWRF (317 aa). The next 14 beta stranded transmembrane spans lie at 190 to 200, 232 to 243, 248 to 258, 273 to 283, 287 to 297, 326 to 335, 340 to 350, 368 to 377, 381 to 391, 411 to 420, 427 to 437, 456 to 465, 472 to 482, and 495 to 505; these read WRFSGGISPAV, LNYEIEAEKLTP, HYLLFRSNIGG, FGRAYLGWQYK, QTAGILPFYQV, VGVQLSHTYR, WQFSVALEHYR, GFYVSSAKRL, ATVFGGWQFVR, NGVYAGWAQE, LNSRVSASYAR, WNVSLALSHD, IVPALNYRFGR, and SEVFVSADWRF.

The protein belongs to the Slam family.

It is found in the cell outer membrane. In terms of biological role, required for correct export to the cell surface of cell outer membrane lipoprotein HpuA heterologously in E.coli (hpuA does not exist in N.meningitidis strain MC58). The sequence is that of Surface lipoprotein assembly modifier 2 from Neisseria meningitidis serogroup B (strain ATCC BAA-335 / MC58).